The sequence spans 154 residues: PTTG1IP family member 2 (154 aa).

The N-terminal stretch at 1–26 (MCWLRAWGQILLPVFLSLFLIQLLIS) is a signal peptide. Topologically, residues 27–97 (FSENGFIHSP…SIYWLNCKVD (71 aa)) are extracellular. A helical membrane pass occupies residues 98 to 118 (MFGIMMLLLIAVLITGFVWYC). Topologically, residues 119 to 154 (CAYHFYLQDLNRNRVYFYGRRETVPIHDRSATVYDE) are cytoplasmic.

It is found in the membrane. This is PTTG1IP family member 2 from Homo sapiens (Human).